Here is a 103-residue protein sequence, read N- to C-terminus: UPF0145 protein BT9727_3206 (103 aa).

It belongs to the UPF0145 family.

The chain is UPF0145 protein BT9727_3206 from Bacillus thuringiensis subsp. konkukian (strain 97-27).